We begin with the raw amino-acid sequence, 245 residues long: 1-(5-phosphoribosyl)-5-[(5-phosphoribosylamino)methylideneamino] imidazole-4-carboxamide isomerase (245 aa).

Aspartate 11 functions as the Proton acceptor in the catalytic mechanism. Aspartate 132 serves as the catalytic Proton donor.

It belongs to the HisA/HisF family.

Its subcellular location is the cytoplasm. The catalysed reaction is 1-(5-phospho-beta-D-ribosyl)-5-[(5-phospho-beta-D-ribosylamino)methylideneamino]imidazole-4-carboxamide = 5-[(5-phospho-1-deoxy-D-ribulos-1-ylimino)methylamino]-1-(5-phospho-beta-D-ribosyl)imidazole-4-carboxamide. Its pathway is amino-acid biosynthesis; L-histidine biosynthesis; L-histidine from 5-phospho-alpha-D-ribose 1-diphosphate: step 4/9. This is 1-(5-phosphoribosyl)-5-[(5-phosphoribosylamino)methylideneamino] imidazole-4-carboxamide isomerase from Bacillus licheniformis (strain ATCC 14580 / DSM 13 / JCM 2505 / CCUG 7422 / NBRC 12200 / NCIMB 9375 / NCTC 10341 / NRRL NRS-1264 / Gibson 46).